Reading from the N-terminus, the 309-residue chain is Probable RNA polymerase II nuclear localization protein SLC7A6OS (309 aa).

2 disordered regions span residues 101–134 (GRYR…AGNS) and 233–287 (PEDI…QRMW). Over residues 106–118 (LSSRRSLGTTSSG) the composition is skewed to low complexity. Acidic residues-rich tracts occupy residues 233–245 (PEDI…DENS) and 254–263 (PEEESSDGDE). Residues Ser-302 and Ser-308 each carry the phosphoserine modification.

Belongs to the IWR1/SLC7A6OS family.

The protein localises to the cytoplasm. It is found in the nucleus. Its function is as follows. Directs RNA polymerase II nuclear import. This chain is Probable RNA polymerase II nuclear localization protein SLC7A6OS (SLC7A6OS), found in Homo sapiens (Human).